We begin with the raw amino-acid sequence, 489 residues long: Mitochondrial-processing peptidase subunit beta (489 aa).

A mitochondrion-targeting transit peptide spans 1 to 43 (MAAAAARVVLSSAARRRLWGFSESLLIRGAAGRSLYFGENRLR). Residue His101 coordinates Zn(2+). Residue Glu104 is the Proton acceptor of the active site. 2 residues coordinate Zn(2+): His105 and Glu181.

This sequence belongs to the peptidase M16 family. In terms of assembly, heterodimer of PMPCA (alpha) and PMPCB (beta) subunits, forming the mitochondrial processing protease (MPP) in which PMPCA is involved in substrate recognition and binding and PMPCB is the catalytic subunit. Requires Zn(2+) as cofactor.

The protein resides in the mitochondrion matrix. It carries out the reaction Release of N-terminal transit peptides from precursor proteins imported into the mitochondrion, typically with Arg in position P2.. With respect to regulation, binding to PMPCA is required for catalytic activity. Its function is as follows. Catalytic subunit of the essential mitochondrial processing protease (MPP), which cleaves the mitochondrial sequence off newly imported precursors proteins. Preferentially, cleaves after an arginine at position P2. Required for PINK1 turnover by coupling PINK1 mitochondrial import and cleavage, which results in subsequent PINK1 proteolysis. The chain is Mitochondrial-processing peptidase subunit beta (PMPCB) from Homo sapiens (Human).